The primary structure comprises 351 residues: Phosphate acetyltransferase (351 aa).

This sequence belongs to the phosphate acetyltransferase and butyryltransferase family.

It is found in the cytoplasm. The enzyme catalyses acetyl-CoA + phosphate = acetyl phosphate + CoA. Its pathway is metabolic intermediate biosynthesis; acetyl-CoA biosynthesis; acetyl-CoA from acetate: step 2/2. This chain is Phosphate acetyltransferase (pta), found in Rickettsia prowazekii (strain Madrid E).